A 64-amino-acid polypeptide reads, in one-letter code: Large ribosomal subunit protein bL32 (64 aa).

Residues 1 to 16 are compositionally biased toward basic residues; sequence MAVQKSRKTRSRRGMR. The interval 1-64 is disordered; it reads MAVQKSRKTR…TPKESYEDEE (64 aa).

Belongs to the bacterial ribosomal protein bL32 family.

This Coxiella burnetii (strain CbuK_Q154) (Coxiella burnetii (strain Q154)) protein is Large ribosomal subunit protein bL32.